The primary structure comprises 394 residues: Phosphoglycerate kinase (394 aa).

Residues 21 to 23, arginine 36, 59 to 62, arginine 118, and arginine 151 each bind substrate; these read DFN and HLGR. At serine 183 the chain carries Phosphoserine. Lysine 201 contributes to the ATP binding site. Phosphothreonine is present on threonine 299. Residues glutamate 323 and 350–353 each bind ATP; that span reads GGDS.

It belongs to the phosphoglycerate kinase family. As to quaternary structure, monomer.

It is found in the cytoplasm. It carries out the reaction (2R)-3-phosphoglycerate + ATP = (2R)-3-phospho-glyceroyl phosphate + ADP. Its pathway is carbohydrate degradation; glycolysis; pyruvate from D-glyceraldehyde 3-phosphate: step 2/5. The sequence is that of Phosphoglycerate kinase (pgk) from Bacillus subtilis (strain 168).